Reading from the N-terminus, the 94-residue chain is Large ribosomal subunit protein bL27 (94 aa).

A propeptide spanning residues 1–9 (MLKLNLQFF) is cleaved from the precursor.

It belongs to the bacterial ribosomal protein bL27 family. Post-translationally, the N-terminus is cleaved by ribosomal processing cysteine protease Prp.

This Staphylococcus epidermidis (strain ATCC 35984 / DSM 28319 / BCRC 17069 / CCUG 31568 / BM 3577 / RP62A) protein is Large ribosomal subunit protein bL27.